The chain runs to 1709 residues: Sialoadhesin (1709 aa).

The signal sequence occupies residues 1–19 (MGFLPKLLLLASFFPAGQA). Positions 20-136 (SWGVSSPQDV…DVKGTLVTVT (117 aa)) constitute an Ig-like V-type domain. Residues 20–1641 (SWGVSSPQDV…ALHRLHQFQQ (1622 aa)) lie on the Extracellular side of the membrane. 4 disulfides stabilise this stretch: C36/C166, C41/C98, C160/C217, and C262/C305. N-acetylneuraminate-binding positions include Y63, R116, and 122–126 (VNRWS). Ig-like C2-type domains lie at 139–233 (PRVP…IHLQ), 238–320 (PKGV…PPIS), 326–405 (AEVQ…GPVS), 411–507 (PPLT…LDFH), 511–593 (ARLL…AVLT), 601–705 (PTFT…ATFN), 708–785 (ATVL…AQLS), 799–894 (PKLS…FQVR), 898–977 (VQVS…APIS), 984–1083 (PRHV…ADFD), 1085–1165 (QAVN…RPIT), and 1176–1248 (RLTY…SPLG). N-linked (GlcNAc...) asparagine glycosylation is present at N159. N-linked (GlcNAc...) asparagine glycans are attached at residues N265 and N339. Disulfide bonds link C346–C390 and C433–C491. Residue N499 is glycosylated (N-linked (GlcNAc...) asparagine). Intrachain disulfides connect C531/C575 and C624/C689. N697, N726, N730, and N741 each carry an N-linked (GlcNAc...) asparagine glycan. 2 cysteine pairs are disulfide-bonded: C729–C774 and C817–C876. N-linked (GlcNAc...) asparagine glycosylation occurs at N886. 2 disulfides stabilise this stretch: C916–C960 and C1005–C1067. Residues N1104 and N1138 are each glycosylated (N-linked (GlcNAc...) asparagine). Disulfide bonds link C1107–C1149 and C1193–C1241. An N-linked (GlcNAc...) asparagine glycan is attached at N1251. Ig-like C2-type domains are found at residues 1259–1341 (EGVR…AALQ), 1350–1442 (VLSS…RLQV), 1445–1528 (ARVV…VMLR), and 1536–1631 (PTMM…FGVR). 2 cysteine pairs are disulfide-bonded: C1281–C1324 and C1367–C1425. Residues N1462 and N1476 are each glycosylated (N-linked (GlcNAc...) asparagine). 2 disulfide bridges follow: C1465–C1511 and C1554–C1613. Residues 1642-1662 (LLWVLGLLVGLLLLLLGLGAC) traverse the membrane as a helical segment. Residues 1663 to 1709 (YTWRRRRVCKQSMGENSVEMAFQKETTQLIDPDAATCETSTCAPPLG) lie on the Cytoplasmic side of the membrane.

It belongs to the immunoglobulin superfamily. SIGLEC (sialic acid binding Ig-like lectin) family. As to quaternary structure, interacts with TYROBP. Interacts with CLEC10A. Expressed by macrophages in various tissues. High levels are found in spleen, lymph node, perivascular macrophages in brain and lower levels in bone marrow, liver Kupffer cells and lamina propria of colon and lung. Also expressed by inflammatory macrophages in rheumatoid arthritis.

It localises to the cell membrane. Its subcellular location is the secreted. Macrophage-restricted adhesion molecule that mediates sialic-acid dependent binding to lymphocytes, including granulocytes, monocytes, natural killer cells, B-cells and CD8 T-cells. Plays a crucial role in limiting bacterial dissemination by engaging sialylated bacteria to promote effective phagocytosis and antigen presentation for the adaptive immune response. Mediates the uptake of various enveloped viruses via sialic acid recognition and subsequently induces the formation of intracellular compartments filled with virions (VCCs). In turn, enhances macrophage-to-T-cell transmission of several viruses including HIV-1 or SARS-CoV-2. Acts as an endocytic receptor mediating clathrin dependent endocytosis. Preferentially binds to alpha-2,3-linked sialic acid. Binds to SPN/CD43 on T-cells. May play a role in hemopoiesis. Plays a role in the inhibition of antiviral innate immune by promoting TBK1 degradation via TYROBP and TRIM27-mediated ubiquitination. Its function is as follows. (Microbial infection) Facilitates viral cytoplasmic entry into activated dendritic cells via recognition of sialylated gangliosides pesent on viral membrane. The chain is Sialoadhesin (SIGLEC1) from Homo sapiens (Human).